We begin with the raw amino-acid sequence, 427 residues long: Enolase (427 aa).

Gln-162 provides a ligand contact to (2R)-2-phosphoglycerate. Catalysis depends on Glu-204, which acts as the Proton donor. Mg(2+) is bound by residues Asp-241, Glu-283, and Asp-310. Residues Lys-335, Arg-364, Ser-365, and Lys-386 each contribute to the (2R)-2-phosphoglycerate site. Lys-335 serves as the catalytic Proton acceptor.

Belongs to the enolase family. The cofactor is Mg(2+).

The protein localises to the cytoplasm. It localises to the secreted. The protein resides in the cell surface. The enzyme catalyses (2R)-2-phosphoglycerate = phosphoenolpyruvate + H2O. It participates in carbohydrate degradation; glycolysis; pyruvate from D-glyceraldehyde 3-phosphate: step 4/5. In terms of biological role, catalyzes the reversible conversion of 2-phosphoglycerate (2-PG) into phosphoenolpyruvate (PEP). It is essential for the degradation of carbohydrates via glycolysis. This chain is Enolase, found in Mycolicibacterium smegmatis (strain ATCC 700084 / mc(2)155) (Mycobacterium smegmatis).